Here is a 586-residue protein sequence, read N- to C-terminus: Aspartate--tRNA ligase (586 aa).

Glu-171 serves as a coordination point for L-aspartate. The interval 195-198 (QLFK) is aspartate. Arg-217 lines the L-aspartate pocket. ATP contacts are provided by residues 217–219 (RDE) and Gln-226. An L-aspartate-binding site is contributed by His-448. Position 482 (Glu-482) interacts with ATP. Arg-489 contributes to the L-aspartate binding site. 534 to 537 (GLDR) serves as a coordination point for ATP.

It belongs to the class-II aminoacyl-tRNA synthetase family. Type 1 subfamily. In terms of assembly, homodimer.

The protein resides in the cytoplasm. The catalysed reaction is tRNA(Asp) + L-aspartate + ATP = L-aspartyl-tRNA(Asp) + AMP + diphosphate. Catalyzes the attachment of L-aspartate to tRNA(Asp) in a two-step reaction: L-aspartate is first activated by ATP to form Asp-AMP and then transferred to the acceptor end of tRNA(Asp). The polypeptide is Aspartate--tRNA ligase (Buchnera aphidicola subsp. Acyrthosiphon pisum (strain 5A)).